The chain runs to 753 residues: 5-methyltetrahydropteroyltriglutamate--homocysteine methyltransferase (753 aa).

5-methyltetrahydropteroyltri-L-glutamate-binding positions include arginine 17 to lysine 20 and lysine 117. Residues isoleucine 431 to serine 433 and glutamate 484 contribute to the L-homocysteine site. L-methionine-binding positions include isoleucine 431–serine 433 and glutamate 484. 5-methyltetrahydropteroyltri-L-glutamate-binding positions include arginine 515–cysteine 516 and tryptophan 561. Residue aspartate 599 participates in L-homocysteine binding. Residue aspartate 599 participates in L-methionine binding. A 5-methyltetrahydropteroyltri-L-glutamate-binding site is contributed by glutamate 605. Zn(2+) is bound by residues histidine 641, cysteine 643, and glutamate 665. Residue histidine 694 is the Proton donor of the active site. Cysteine 726 serves as a coordination point for Zn(2+).

This sequence belongs to the vitamin-B12 independent methionine synthase family. It depends on Zn(2+) as a cofactor.

The enzyme catalyses 5-methyltetrahydropteroyltri-L-glutamate + L-homocysteine = tetrahydropteroyltri-L-glutamate + L-methionine. It functions in the pathway amino-acid biosynthesis; L-methionine biosynthesis via de novo pathway; L-methionine from L-homocysteine (MetE route): step 1/1. Its function is as follows. Catalyzes the transfer of a methyl group from 5-methyltetrahydrofolate to homocysteine resulting in methionine formation. The chain is 5-methyltetrahydropteroyltriglutamate--homocysteine methyltransferase from Escherichia coli O157:H7 (strain EC4115 / EHEC).